Consider the following 327-residue polypeptide: MIDDIKNVSVVIPVYNEEESLPVLIERTLAACRQIGKPWEIILVDDGSSDRSAELLTEAASDPEKHIIAVLLNRNYGQHSAIMAGFQQAVGDVVITLDADLQNPPEEIPRLVEYAAQGYDVVGTVRANRQDSLFRKLASKTINMMIRRSTGKSMADYGCMLRAYRRHIVSAMLHCHERSTFIPILANTFARKTIEIDVMHAEREFGTSKYSFLKLINLMYDLLTCLTTTPLRILSLIGSVVALSGFLLALLLIGLRLFLGAEWAAEGVFTLFAVLFMFIGAQFVGMGLLGEYIGRIYTDVRARPRYFVQKTVSAATPLTTSLRDEEE.

2 consecutive transmembrane segments (helical) span residues 233-253 (ILSL…LLLI) and 268-288 (VFTL…GMGL).

Belongs to the glycosyltransferase 2 family.

The protein localises to the cell inner membrane. It carries out the reaction UDP-4-deoxy-4-formamido-beta-L-arabinose + di-trans,octa-cis-undecaprenyl phosphate = 4-deoxy-4-formamido-alpha-L-arabinopyranosyl di-trans,octa-cis-undecaprenyl phosphate + UDP. Its pathway is glycolipid biosynthesis; 4-amino-4-deoxy-alpha-L-arabinose undecaprenyl phosphate biosynthesis; 4-amino-4-deoxy-alpha-L-arabinose undecaprenyl phosphate from UDP-4-deoxy-4-formamido-beta-L-arabinose and undecaprenyl phosphate: step 1/2. The protein operates within bacterial outer membrane biogenesis; lipopolysaccharide biosynthesis. In terms of biological role, catalyzes the transfer of 4-deoxy-4-formamido-L-arabinose from UDP to undecaprenyl phosphate. The modified arabinose is attached to lipid A and is required for resistance to polymyxin and cationic antimicrobial peptides. This chain is Undecaprenyl-phosphate 4-deoxy-4-formamido-L-arabinose transferase, found in Pectobacterium carotovorum subsp. carotovorum (strain PC1).